The following is a 688-amino-acid chain: Acyl-CoA synthetase short-chain family member B, mitochondrial (688 aa).

This sequence belongs to the ATP-dependent AMP-binding enzyme family.

It localises to the mitochondrion. The catalysed reaction is acetate + ATP + CoA = acetyl-CoA + AMP + diphosphate. In terms of biological role, activates acetate so that it can be used for lipid synthesis or for energy generation. In Dictyostelium discoideum (Social amoeba), this protein is Acyl-CoA synthetase short-chain family member B, mitochondrial (aslB).